The following is a 156-amino-acid chain: ATP synthase subunit b (156 aa).

Residues 11-31 traverse the membrane as a helical segment; it reads AIAFILFVWFCMKYVWPPLMA.

This sequence belongs to the ATPase B chain family. In terms of assembly, F-type ATPases have 2 components, F(1) - the catalytic core - and F(0) - the membrane proton channel. F(1) has five subunits: alpha(3), beta(3), gamma(1), delta(1), epsilon(1). F(0) has three main subunits: a(1), b(2) and c(10-14). The alpha and beta chains form an alternating ring which encloses part of the gamma chain. F(1) is attached to F(0) by a central stalk formed by the gamma and epsilon chains, while a peripheral stalk is formed by the delta and b chains.

It localises to the cell inner membrane. In terms of biological role, f(1)F(0) ATP synthase produces ATP from ADP in the presence of a proton or sodium gradient. F-type ATPases consist of two structural domains, F(1) containing the extramembraneous catalytic core and F(0) containing the membrane proton channel, linked together by a central stalk and a peripheral stalk. During catalysis, ATP synthesis in the catalytic domain of F(1) is coupled via a rotary mechanism of the central stalk subunits to proton translocation. Functionally, component of the F(0) channel, it forms part of the peripheral stalk, linking F(1) to F(0). The chain is ATP synthase subunit b from Salmonella agona (strain SL483).